We begin with the raw amino-acid sequence, 281 residues long: Diaminopimelate epimerase (281 aa).

2 residues coordinate substrate: Asn-14 and Asn-65. Cys-74 acts as the Proton donor in catalysis. Substrate-binding positions include 75-76, Asn-165, Asn-198, and 216-217; these read GN and ER. Cys-225 functions as the Proton acceptor in the catalytic mechanism. 226–227 is a substrate binding site; it reads GT.

The protein belongs to the diaminopimelate epimerase family. Homodimer.

It localises to the cytoplasm. The catalysed reaction is (2S,6S)-2,6-diaminopimelate = meso-2,6-diaminopimelate. It functions in the pathway amino-acid biosynthesis; L-lysine biosynthesis via DAP pathway; DL-2,6-diaminopimelate from LL-2,6-diaminopimelate: step 1/1. Its function is as follows. Catalyzes the stereoinversion of LL-2,6-diaminopimelate (L,L-DAP) to meso-diaminopimelate (meso-DAP), a precursor of L-lysine and an essential component of the bacterial peptidoglycan. This chain is Diaminopimelate epimerase, found in Leptospira interrogans serogroup Icterohaemorrhagiae serovar copenhageni (strain Fiocruz L1-130).